Consider the following 361-residue polypeptide: Mitogen-activated protein kinase 14A (361 aa).

A Protein kinase domain is found at 25–309 (YQNLSPVGSG…AAEALAHPYF (285 aa)). ATP is bound by residues 31-39 (VGSGAYGSV) and lysine 54. The active-site Proton acceptor is aspartate 169. Threonine 181 is modified (phosphothreonine; by MAP2K3). Positions 181–183 (TGY) match the TXY motif. Tyrosine 183 is modified (phosphotyrosine; by MAP2K3).

The protein belongs to the protein kinase superfamily. CMGC Ser/Thr protein kinase family. MAP kinase subfamily. It depends on Mg(2+) as a cofactor. In terms of processing, dually phosphorylated on Thr-181 and Tyr-183, which activates the enzyme.

It localises to the cytoplasm. Its subcellular location is the nucleus. The enzyme catalyses L-seryl-[protein] + ATP = O-phospho-L-seryl-[protein] + ADP + H(+). The catalysed reaction is L-threonyl-[protein] + ATP = O-phospho-L-threonyl-[protein] + ADP + H(+). Its activity is regulated as follows. Activated by threonine and tyrosine phosphorylation by the dual specificity kinase, MKK3. Functionally, serine/threonine kinase which acts as an essential component of the MAP kinase signal transduction pathway. Mapk14a is one of the four p38 MAPKs which play an important role in the cascades of cellular responses evoked by extracellular stimuli such as pro-inflammatory cytokines or physical stress leading to direct activation of transcription factors. Accordingly, p38 MAPKs phosphorylate a broad range of proteins and it has been estimated that they may have approximately 200 to 300 substrates each. Some of the targets are downstream kinases which are activated through phosphorylation and further phosphorylate additional targets. Required for cytokinesis on the future dorsal side of the blastodisc, suggesting a role in symmetrical and synchronous blastomere cleavage. This is Mitogen-activated protein kinase 14A (mapk14a) from Danio rerio (Zebrafish).